The following is a 149-amino-acid chain: Sec-independent protein translocase protein TatB (149 aa).

The helical transmembrane segment at 1 to 22 (MFDGIGFMELLLIGVLGLIVLG) threads the bilayer. A compositionally biased stretch (polar residues) spans 86–113 (LKQAAQSVNRPYQVQDTPSAQDNQIHNP). A disordered region spans residues 86–149 (LKQAAQSVNR…DPRSNTKANG (64 aa)). The segment covering 114 to 135 (ASQTVSTEASSTSASSAPKSES) has biased composition (low complexity).

Belongs to the TatB family. In terms of assembly, the Tat system comprises two distinct complexes: a TatABC complex, containing multiple copies of TatA, TatB and TatC subunits, and a separate TatA complex, containing only TatA subunits. Substrates initially bind to the TatABC complex, which probably triggers association of the separate TatA complex to form the active translocon.

The protein resides in the cell inner membrane. Part of the twin-arginine translocation (Tat) system that transports large folded proteins containing a characteristic twin-arginine motif in their signal peptide across membranes. Together with TatC, TatB is part of a receptor directly interacting with Tat signal peptides. TatB may form an oligomeric binding site that transiently accommodates folded Tat precursor proteins before their translocation. In Shewanella oneidensis (strain ATCC 700550 / JCM 31522 / CIP 106686 / LMG 19005 / NCIMB 14063 / MR-1), this protein is Sec-independent protein translocase protein TatB.